Consider the following 334-residue polypeptide: Thioredoxin reductase aclT (334 aa).

FAD-binding positions include 16–19 (GGPA), 38–43 (NASIDR), I93, A122, D294, and 302–303 (TL).

Belongs to the class-II pyridine nucleotide-disulfide oxidoreductase family. As to quaternary structure, homodimer. FAD serves as cofactor.

It functions in the pathway mycotoxin biosynthesis. Functionally, thioredoxin reductase; part of the gene cluster that mediates the biosynthesis of aspirochlorine (or antibiotic A30641), an unusual halogenated spiro compound with distinctive antifungal properties due to selective inhibition of protein biosynthesis, and which is also active against bacteria, viruses, and murine tumor cells. The non-ribosomal peptide synthetase (NRPS) aclP is responsible the formation of the diketopiperazine (DKP) core from the condensation of 2 phenylalanine residues. One Phe residue is tailored into chlorotyrosine by hydroxylation and chlorination, whereas the second Phe undergoes an unprecedented C-C bond cleavage to be converted into glycine. After formation of the DKP, sulfur is incorporated into the DKP by conjugation with glutathione by aclG, followed by its stepwise degradation to the thiol by aclI, aclJ and aclK, and the dithiol oxidation by aclT. In addition, oxygenases (aclB, aclC, aclL and aclO) and O-methyltransferases (aclM and aclU) act as tailoring enzymes to produce the intermediate dechloroaspirochlorine. Ultimately, chlorination of dechloroaspirochlorine by the halogenase aclH is the last step in the aspirochlorine pathway. This Aspergillus oryzae (strain ATCC 42149 / RIB 40) (Yellow koji mold) protein is Thioredoxin reductase aclT.